The chain runs to 883 residues: Valine--tRNA ligase (883 aa).

The 'HIGH' region motif lies at 46-56; it reads PNVTGKLHLGH. Residues 520–524 carry the 'KMSKS' region motif; sequence KMSKS. Lysine 523 contributes to the ATP binding site. The stretch at 809 to 883 forms a coiled coil; it reads LADLLNVEEE…RIDEMKKLVK (75 aa).

It belongs to the class-I aminoacyl-tRNA synthetase family. ValS type 1 subfamily. In terms of assembly, monomer.

The protein localises to the cytoplasm. The enzyme catalyses tRNA(Val) + L-valine + ATP = L-valyl-tRNA(Val) + AMP + diphosphate. Catalyzes the attachment of valine to tRNA(Val). As ValRS can inadvertently accommodate and process structurally similar amino acids such as threonine, to avoid such errors, it has a 'posttransfer' editing activity that hydrolyzes mischarged Thr-tRNA(Val) in a tRNA-dependent manner. This chain is Valine--tRNA ligase, found in Streptococcus pneumoniae serotype 4 (strain ATCC BAA-334 / TIGR4).